A 782-amino-acid chain; its full sequence is Pyridoxal-dependent decarboxylase domain-containing protein 1 (782 aa).

A compositionally biased stretch (basic and acidic residues) spans 26–48; sequence ILEDNQRPSEEEKDGKKYTRKDI. Disordered stretches follow at residues 26–56, 673–695, 702–721, and 726–782; these read ILED…QGSG, QTTG…AGQK, RNSD…EVES, and PMPE…DSLR. Polar residues-rich tracts occupy residues 703–714 and 747–782; these read NSDAMSETSSIS and AEQS…DSLR.

It belongs to the group II decarboxylase family. The cofactor is pyridoxal 5'-phosphate.

The sequence is that of Pyridoxal-dependent decarboxylase domain-containing protein 1 (pdxdc1) from Xenopus laevis (African clawed frog).